We begin with the raw amino-acid sequence, 349 residues long: Interferon regulatory factor 2 (349 aa).

A DNA-binding region (IRF tryptophan pentad repeat) is located at residues 5 to 113; sequence RMRMRPWLEE…NAFRVYRMLP (109 aa). N6-acetyllysine occurs at positions 75 and 78. Residue Lys-137 forms a Glycyl lysine isopeptide (Lys-Gly) (interchain with G-Cter in SUMO); alternate linkage. Lys-137 participates in a covalent cross-link: Glycyl lysine isopeptide (Lys-Gly) (interchain with G-Cter in SUMO2); alternate. A Glycyl lysine isopeptide (Lys-Gly) (interchain with G-Cter in SUMO) cross-link involves residue Lys-166. Residue Ser-225 is modified to Phosphoserine. Residues 230–239 show a composition bias toward polar residues; sequence YAESETTDSV. The segment at 230 to 253 is disordered; it reads YAESETTDSVASDEENAEGRPHWR. A Glycyl lysine isopeptide (Lys-Gly) (interchain with G-Cter in SUMO2) cross-link involves residue Lys-260. Lys-293 participates in a covalent cross-link: Glycyl lysine isopeptide (Lys-Gly) (interchain with G-Cter in SUMO). The disordered stretch occupies residues 303 to 349; the sequence is SSWPPFTDLPLPAPVTPTPSSSRPDRETRASVIKKTSDITQARVKSC.

Belongs to the IRF family. As to quaternary structure, interacts with BRD7, IRF2BP1 and IRF2BP2. Interacts with CREBBP in growing cells; the interaction acetylates IRF2 and regulates IRF2-dependent H4 promoter activity. In terms of processing, acetylated by CBP/ p300 during cell-growth. Acetylation on Lys-75 is required for stimulation of H4 promoter activity. The major sites of sumoylation are Lys-137 and Lys-293. Sumoylation with SUMO1 increases its transcriptional repressor activity on IRF1 and diminishes its ability to activate ISRE and H4 promoter.

The protein resides in the nucleus. Its function is as follows. Specifically binds to the upstream regulatory region of type I IFN and IFN-inducible MHC class I genes (the interferon consensus sequence (ICS)) and represses those genes. Also acts as an activator for several genes including H4 and IL7. Constitutively binds to the ISRE promoter to activate IL7. Involved in cell cycle regulation through binding the site II (HiNF-M) promoter region of H4 and activating transcription during cell growth. Antagonizes IRF1 transcriptional activation. The protein is Interferon regulatory factor 2 (Irf2) of Mus musculus (Mouse).